We begin with the raw amino-acid sequence, 303 residues long: Ribonuclease Z (303 aa).

Zn(2+) is bound by residues H61, H63, D65, H66, H139, D207, and H266. Residue D65 is the Proton acceptor of the active site.

It belongs to the RNase Z family. As to quaternary structure, homodimer. Requires Zn(2+) as cofactor.

The enzyme catalyses Endonucleolytic cleavage of RNA, removing extra 3' nucleotides from tRNA precursor, generating 3' termini of tRNAs. A 3'-hydroxy group is left at the tRNA terminus and a 5'-phosphoryl group is left at the trailer molecule.. Zinc phosphodiesterase, which displays some tRNA 3'-processing endonuclease activity. Probably involved in tRNA maturation, by removing a 3'-trailer from precursor tRNA. This chain is Ribonuclease Z, found in Clostridium kluyveri (strain ATCC 8527 / DSM 555 / NBRC 12016 / NCIMB 10680 / K1).